We begin with the raw amino-acid sequence, 753 residues long: MERARPEPQPQQRPLRPAPPLLPVEGTTFWAAAVEPPPSPPTLSAAASATLASSCGEAVASGLPPAVRRLLQVKPEQVLLLPQPQARDEEAAASPAQARLLQFRPDLRLLPPPSASEGAPSRPELHPVQPRALHFKAKKQELGPGLDPSVGPRGGVETGPRASRVVKLEGPGPALAYFRGNEKGKLEAEEVMRDAMKGGDGKSPAAIREGVIKTEEPERLLEDCRLDAEPASNGLVHGSAEVILAPTSGAFGPHQQDLRIPLTLHTVPPGARIQFQGAPPSELIRLTKVPLTPVPIKMQSLLEPSVKIETKDVPLTVLPSDAGIPDTPFSKDRNGHVKRPMNAFMVWARIHRPALAKANPAANNAEISVQLGLEWNKLSEEQKKPYYDEAQKIKEKHREEFPGWVYQPRPGKRKRFPLSVSNVFSGTTQNIISTNPTTVYPYRSPTYSVVIPSLQNPITHPVGETSPAIQLPTPAVQRPSPVTLFQPSVSSAAQVAVQDPSLPLYPALPPQRFAGPSQTDTHQLHSEGTHTVKQPTPVSLESTNRISNSASTAHARFATSTIQPPKEYSSVSPCPRSAPIPQASPIPHPHVYQPPPLGHPATLFGTPPRFSFHHPYFLPGPHYFPSSTCPYSRPPFGYGNFPSSMPECLGYYEDRYQKHEAIFSALNRDYSFRDYSSERTHSENSRSCENMNGTSFYNSHSHSGEEYLNPVPQLDIGALENVFTAPTSTPSSIQQVNVTDSDEEEEEKVLRDL.

Disordered stretches follow at residues 1-45 (MERA…TLSA) and 140-161 (QELG…TGPR). A compositionally biased stretch (pro residues) spans 7–22 (EPQPQQRPLRPAPPLL). The HMG box DNA-binding region spans 337 to 405 (VKRPMNAFMV…KHREEFPGWV (69 aa)). Disordered regions lie at residues 514 to 540 (AGPS…PVSL) and 726 to 753 (PTST…LRDL). 2 stretches are compositionally biased toward polar residues: residues 531–540 (TVKQPTPVSL) and 726–739 (PTST…VNVT).

Interacts with CTNNB1, competitively inhibiting CTNNB1-TCF7L2/TCF4 interaction.

It is found in the nucleus. It localises to the cytoplasm. In terms of biological role, acts both as a transcriptional activator and a repressor. Binds to the DNA sequence 5'-ACAAT-3' and shows a preference for guanine residues surrounding this core motif. Binds to its own promoter and activates its own transcription. Required to activate the expression of postmeiotic genes involved in spermiogenesis. Binds to the promoter region of CTNNB1 and represses its transcription which leads to inhibition of Wnt signaling. Also inhibits Wnt signaling by binding to the CTNNB1 protein, preventing interaction of CTNNB1 with TCF7L2/TCF4. The sequence is that of Transcription factor SOX-30 (SOX30) from Macaca fascicularis (Crab-eating macaque).